The primary structure comprises 405 residues: Replication factor C large subunit (405 aa).

47–54 (GPPGVGKT) is an ATP binding site.

It belongs to the activator 1 small subunits family. RfcL subfamily. In terms of assembly, heteromultimer composed of small subunits (RfcS) and large subunits (RfcL).

Part of the RFC clamp loader complex which loads the PCNA sliding clamp onto DNA. The sequence is that of Replication factor C large subunit from Saccharolobus islandicus (strain L.S.2.15 / Lassen #1) (Sulfolobus islandicus).